We begin with the raw amino-acid sequence, 73 residues long: uncharacterized protein (73 aa).

This is an uncharacterized protein from Ureaplasma parvum serovar 3 (strain ATCC 700970).